The primary structure comprises 281 residues: Large ribosomal subunit protein uL2 (281 aa).

Positions 27-38 (DSPEKSLTEPLK) are enriched in basic and acidic residues. Disordered regions lie at residues 27-59 (DSPE…GGHK) and 225-281 (AMNP…ARSQ). The segment covering 45 to 59 (VHGHITRRHQGGGHK) has biased composition (basic residues).

The protein belongs to the universal ribosomal protein uL2 family. Part of the 50S ribosomal subunit. Forms a bridge to the 30S subunit in the 70S ribosome.

Its function is as follows. One of the primary rRNA binding proteins. Required for association of the 30S and 50S subunits to form the 70S ribosome, for tRNA binding and peptide bond formation. It has been suggested to have peptidyltransferase activity; this is somewhat controversial. Makes several contacts with the 16S rRNA in the 70S ribosome. This is Large ribosomal subunit protein uL2 from Myxococcus xanthus (strain DK1622).